The primary structure comprises 206 residues: Protein GET1 (206 aa).

The Lumenal portion of the chain corresponds to 1–4 (MPSL). A helical membrane pass occupies residues 5 to 24 (LITALFLNVIIYVINTVGAA). The Cytoplasmic segment spans residues 25–110 (TVDGLLWLLY…TFDITIKIAR (86 aa)). Residues 75 to 100 (AKLRRRHDKALEAYEAKNNELTQSKS) are a coiled coil. Residues 111 to 131 (WAATSGLMLFLQFWYSKTPIF) form a helical membrane-spanning segment. The Lumenal portion of the chain corresponds to 132-155 (TLPPGWIPWQVQWVLSFPRAPMGT). Residues 156-172 (VSIQIWSGACATVVALV) form a helical membrane-spanning segment. Topologically, residues 173-206 (GDAMKASLAYVSKPKIDRIKLGATMEGKEGKKRQ) are cytoplasmic.

It belongs to the WRB/GET1 family. In terms of assembly, interacts with GET3.

Its subcellular location is the endoplasmic reticulum membrane. Required for the post-translational delivery of tail-anchored (TA) proteins to the endoplasmic reticulum. Acts as a membrane receptor for soluble GET3, which recognizes and selectively binds the transmembrane domain of TA proteins in the cytosol. In Ajellomyces capsulatus (strain H143) (Darling's disease fungus), this protein is Protein GET1.